Reading from the N-terminus, the 212-residue chain is Deoxyribose-phosphate aldolase (212 aa).

Asp89 functions as the Proton donor/acceptor in the catalytic mechanism. Lys151 functions as the Schiff-base intermediate with acetaldehyde in the catalytic mechanism. The active-site Proton donor/acceptor is the Lys180.

This sequence belongs to the DeoC/FbaB aldolase family. DeoC type 1 subfamily.

It localises to the cytoplasm. The enzyme catalyses 2-deoxy-D-ribose 5-phosphate = D-glyceraldehyde 3-phosphate + acetaldehyde. The protein operates within carbohydrate degradation; 2-deoxy-D-ribose 1-phosphate degradation; D-glyceraldehyde 3-phosphate and acetaldehyde from 2-deoxy-alpha-D-ribose 1-phosphate: step 2/2. Its function is as follows. Catalyzes a reversible aldol reaction between acetaldehyde and D-glyceraldehyde 3-phosphate to generate 2-deoxy-D-ribose 5-phosphate. The polypeptide is Deoxyribose-phosphate aldolase (Clostridium botulinum (strain 657 / Type Ba4)).